Reading from the N-terminus, the 172-residue chain is Co-chaperone protein HscB homolog (172 aa).

The J domain maps to 2–74 (NHFELFGLVE…LRRAEYLLSL (73 aa)).

This sequence belongs to the HscB family. Interacts with HscA and stimulates its ATPase activity.

Co-chaperone involved in the maturation of iron-sulfur cluster-containing proteins. Seems to help targeting proteins to be folded toward HscA. The polypeptide is Co-chaperone protein HscB homolog (Aeromonas salmonicida (strain A449)).